A 65-amino-acid chain; its full sequence is Lantipeptide Flvbeta.h (65 aa).

Residues 1–27 (MERYGHLAGVIPVDEIDDMFESNVIGG) constitute a propeptide, cleaved by FlvT. The residue at position 28 (Thr28) is a 2,3-didehydrobutyrine; by FlvM2. A cross-link (lanthionine (Ser-Cys); by FlvM2) is located at residues 29–33 (SSIDC). Ser30 bears the 2,3-didehydroalanine (Ser); by FlvM2 mark. A 2,3-didehydrobutyrine; by FlvM2 modification is found at Thr44. Residues 48–54 (TVRIEFC) constitute a cross-link (beta-methyllanthionine (Thr-Cys); by FlvM2). Residues 56-59 (SAAC) constitute a cross-link (lanthionine (Ser-Cys); by FlvM2). A cross-link (beta-methyllanthionine (Thr-Cys); by FlvM2) is located at residues 60-63 (TYSC).

Contains LL-lanthionine, DL-lanthionine, and DL-beta-methyllanthionine, when coepressed in E.coli with the flavecin synthetase FlvM2.

The protein resides in the secreted. Lanthionine-containing peptide that does probably not show antibacterial activity, since its analog [+2]Flvbeta.h does not show antibacterial activity against M.luteus. Also does not show antibiotic activity when tested with [Del2]Flvalpha.a, an analog of Flvalpha.a, which is encoded by the same operon than Flvbeta.h. The bactericidal activity of lantibiotics is based on depolarization of energized bacterial cytoplasmic membranes, initiated by the formation of aqueous transmembrane pores. This chain is Lantipeptide Flvbeta.h, found in Ruminococcus flavefaciens.